Reading from the N-terminus, the 386-residue chain is Rhomboid domain-containing protein 3 (386 aa).

A run of 5 helical transmembrane segments spans residues 20–40, 58–78, 92–112, 141–161, and 163–183; these read VLML…LVLA, LGHT…TVGW, ASAL…GLGL, GALP…LLSS, and PPFL…AGAF. Residues 324 to 362 form the UBA domain; that stretch reads VSSLRLQQLERMGFPTEQAVVALAATGRVEGAVSLLVGG.

Its subcellular location is the membrane. This Homo sapiens (Human) protein is Rhomboid domain-containing protein 3 (RHBDD3).